We begin with the raw amino-acid sequence, 235 residues long: Carbonic anhydrase 1 (235 aa).

The Alpha-carbonic anhydrase domain maps to 1–235 (GNKQSPVDIK…LKGRTVKASF (235 aa)). His40 (proton donor/acceptor) is an active-site residue. Zn(2+)-binding residues include His69, His71, and His94. Substrate contacts are provided by residues Thr174 and 174-175 (TH).

The protein belongs to the alpha-carbonic anhydrase family. Requires Zn(2+) as cofactor.

The protein resides in the cytoplasm. It carries out the reaction hydrogencarbonate + H(+) = CO2 + H2O. It catalyses the reaction urea = cyanamide + H2O. With respect to regulation, inhibited by acetazolamide. Its function is as follows. Catalyzes the reversible hydration of carbon dioxide. Can hydrate cyanamide to urea. This is Carbonic anhydrase 1 (CA1) from Oryctolagus cuniculus (Rabbit).